The chain runs to 286 residues: 4-diphosphocytidyl-2-C-methyl-D-erythritol kinase (286 aa).

Lys-11 is an active-site residue. 93–103 (PFGAGLGGGSS) provides a ligand contact to ATP. Asp-135 is a catalytic residue.

It belongs to the GHMP kinase family. IspE subfamily.

The catalysed reaction is 4-CDP-2-C-methyl-D-erythritol + ATP = 4-CDP-2-C-methyl-D-erythritol 2-phosphate + ADP + H(+). It participates in isoprenoid biosynthesis; isopentenyl diphosphate biosynthesis via DXP pathway; isopentenyl diphosphate from 1-deoxy-D-xylulose 5-phosphate: step 3/6. Functionally, catalyzes the phosphorylation of the position 2 hydroxy group of 4-diphosphocytidyl-2C-methyl-D-erythritol. The sequence is that of 4-diphosphocytidyl-2-C-methyl-D-erythritol kinase from Prosthecochloris aestuarii (strain DSM 271 / SK 413).